The chain runs to 410 residues: Magnesium transporter NIPA3 (410 aa).

Topologically, residues 1 to 67 are extracellular; that stretch reads MGAQVRLPPG…ISANVENKYS (67 aa). 3 N-linked (GlcNAc...) asparagine glycosylation sites follow: asparagine 25, asparagine 35, and asparagine 50. Residues 68 to 88 traverse the membrane as a helical segment; it reads LYVGLVLAVSSSIFIGSSFIL. At 89 to 114 the chain is on the cytoplasmic side; sequence KKKGLLQLASKGITRAGQGGHSYLKE. Residues 115-135 traverse the membrane as a helical segment; it reads WLWWVGLLSMGVGEAANFAAY. Position 136 (alanine 136) is a topological domain, extracellular. A helical membrane pass occupies residues 137 to 157; the sequence is FAPATLVTPLGALSVLISAIL. At 158–165 the chain is on the cytoplasmic side; that stretch reads SSYFLNEH. Residues 166-186 form a helical membrane-spanning segment; the sequence is LNIHGKIGCILSILGSTVMVI. Residues 187 to 207 are Extracellular-facing; sequence HAPQEEEVTSLHEMEMKLRDP. Residues 208–228 traverse the membrane as a helical segment; sequence GFISFAVIVTVISLVLILIVA. Over 229–233 the chain is Cytoplasmic; that stretch reads PKKGQ. The helical transmembrane segment at 234-254 threads the bilayer; that stretch reads TNILVYISICSLIGAFSVSSV. At 255-273 the chain is on the extracellular side; it reads KGLGIAIKELIEWKPVYKH. A helical transmembrane segment spans residues 274 to 294; that stretch reads PLVFVLLAVLVLSVTTQINYL. Topologically, residues 295 to 304 are cytoplasmic; that stretch reads NKALDTFNTS. The helical transmembrane segment at 305–325 threads the bilayer; that stretch reads IVTPIYYVFFTSMVVTCSAIL. Residues 326 to 336 lie on the Extracellular side of the membrane; that stretch reads FQEWYGMTAGD. The helical transmembrane segment at 337–357 threads the bilayer; the sequence is IIGTLSGFFTIIIGIFLLHAF. Topologically, residues 358–410 are cytoplasmic; sequence KNTDITWSELTSTAKKEAVSLNVSENNYVLLENLECSAPGYNDDVTLFSRTDD.

The protein belongs to the NIPA family.

The protein localises to the golgi apparatus membrane. It catalyses the reaction Mg(2+)(in) = Mg(2+)(out). Acts as a Mg(2+) transporter. Can also transport other divalent cations such as Fe(2+), Sr(2+), Ba(2+), Mn(2+), Cu(2+) and Co(2+) but to a much less extent than Mg(2+). In Pongo abelii (Sumatran orangutan), this protein is Magnesium transporter NIPA3 (NIPAL1).